The chain runs to 310 residues: Olfactory receptor 5H14 (310 aa).

Over 1–28 (MEEENATLLTEFVLTGFLYQPQWKIPLF) the chain is Extracellular. N5 carries N-linked (GlcNAc...) asparagine glycosylation. The chain crosses the membrane as a helical span at residues 29–49 (LAFLVIYLITIMGNLGLIAVI). Residues 50–56 (WKDPHLH) are Cytoplasmic-facing. A helical membrane pass occupies residues 57 to 77 (IPMYLLLGNLAFVDALLSSSV). At 78–98 (TLKMLINFLAKSKMISLSECK) the chain is on the extracellular side. C97 and C179 are oxidised to a cystine. A helical transmembrane segment spans residues 99–119 (IQLFSFAISVTTECFLLATMA). Residues 120 to 143 (YDRYVAICKPLLYPAIMTNGLCIR) lie on the Cytoplasmic side of the membrane. Residues 144-164 (LLILSYVGGLLHALIHEGFLF) form a helical membrane-spanning segment. Over 165 to 195 (RLTFCNSNIIQHFYCDIIPLLKISYTDSSIN) the chain is Extracellular. Residues 196-216 (FLMVFIFAGSIQVFTIGTVLI) form a helical membrane-spanning segment. The Cytoplasmic portion of the chain corresponds to 217–240 (SYIFVLYTILKKKSVKGMRKAFST). The helical transmembrane segment at 241–261 (CGAHLLSVSLYYGPLAFMYMG) threads the bilayer. The Extracellular segment spans residues 262-271 (SASPQADDQD). The helical transmembrane segment at 272 to 292 (MMESLFYTVIVPLLNPMIYSL) threads the bilayer. Over 293–310 (RNKQVIASFTKMFKRNDV) the chain is Cytoplasmic.

This sequence belongs to the G-protein coupled receptor 1 family.

It localises to the cell membrane. Odorant receptor. This Homo sapiens (Human) protein is Olfactory receptor 5H14 (OR5H14).